The following is a 642-amino-acid chain: 2-oxoacid:ferredoxin oxidoreductase 2, subunit alpha (642 aa).

Residues 263 to 267 carry the YPITP motif motif; that stretch reads YPITP. The substrate site is built by T266 and R356.

In terms of assembly, heterodimer composed of an alpha and a beta subunit.

It carries out the reaction a 2-oxocarboxylate + 2 oxidized [2Fe-2S]-[ferredoxin] + CoA = an acyl-CoA + 2 reduced [2Fe-2S]-[ferredoxin] + CO2 + H(+). Its function is as follows. Catalyzes the coenzyme A-dependent oxidative decarboxylation of different 2-oxoacids such as pyruvate, 2-oxobutyrate, glyoxylate and 2-oxoglutarate to form their CoA derivatives. This chain is 2-oxoacid:ferredoxin oxidoreductase 2, subunit alpha, found in Aeropyrum pernix (strain ATCC 700893 / DSM 11879 / JCM 9820 / NBRC 100138 / K1).